We begin with the raw amino-acid sequence, 386 residues long: Succinate--CoA ligase [ADP-forming] subunit beta (386 aa).

The ATP-grasp domain maps to 9-244 (KAVLRSYGVS…LDEEDSKEIE (236 aa)). ATP-binding positions include Lys-46, 53–55 (GRG), Glu-99, Cys-102, and Glu-107. Mg(2+)-binding residues include Asn-199 and Asp-213. Residues Asn-264 and 321 to 323 (GIM) contribute to the substrate site.

The protein belongs to the succinate/malate CoA ligase beta subunit family. As to quaternary structure, heterotetramer of two alpha and two beta subunits. The cofactor is Mg(2+).

The enzyme catalyses succinate + ATP + CoA = succinyl-CoA + ADP + phosphate. It carries out the reaction GTP + succinate + CoA = succinyl-CoA + GDP + phosphate. It functions in the pathway carbohydrate metabolism; tricarboxylic acid cycle; succinate from succinyl-CoA (ligase route): step 1/1. Succinyl-CoA synthetase functions in the citric acid cycle (TCA), coupling the hydrolysis of succinyl-CoA to the synthesis of either ATP or GTP and thus represents the only step of substrate-level phosphorylation in the TCA. The beta subunit provides nucleotide specificity of the enzyme and binds the substrate succinate, while the binding sites for coenzyme A and phosphate are found in the alpha subunit. This is Succinate--CoA ligase [ADP-forming] subunit beta from Bacillus cereus (strain ATCC 14579 / DSM 31 / CCUG 7414 / JCM 2152 / NBRC 15305 / NCIMB 9373 / NCTC 2599 / NRRL B-3711).